A 626-amino-acid polypeptide reads, in one-letter code: Chaperone protein HtpG (626 aa).

The interval 1–341 (MAKREFKAES…SEDLSLNISR (341 aa)) is a; substrate-binding. The tract at residues 342 to 552 (EMLQHDRQLK…DGEVTIEMEK (211 aa)) is b. The c stretch occupies residues 553-626 (ILNAMPDNQH…FTNDICKVMA (74 aa)).

The protein belongs to the heat shock protein 90 family. Homodimer.

It is found in the cytoplasm. Functionally, molecular chaperone. Has ATPase activity. This Bacillus licheniformis (strain ATCC 14580 / DSM 13 / JCM 2505 / CCUG 7422 / NBRC 12200 / NCIMB 9375 / NCTC 10341 / NRRL NRS-1264 / Gibson 46) protein is Chaperone protein HtpG.